The following is a 374-amino-acid chain: Alginate lyase (374 aa).

An N-terminal signal peptide occupies residues 1–26 (MRNPKLKNLLAPTLLSLAMFAGATQA). Substrate contacts are provided by residues 67–68 (SK), 140–141 (HT), and Y258.

This sequence belongs to the polysaccharide lyase 5 family.

It localises to the periplasm. It catalyses the reaction Eliminative cleavage of alginate to give oligosaccharides with 4-deoxy-alpha-L-erythro-hex-4-enuronosyl groups at their non-reducing ends and beta-D-mannuronate at their reducing end.. Catalyzes the depolymerization of alginate by cleaving the beta-1,4 glycosidic bond between two adjacent sugar residues via a beta-elimination mechanism. May serve to degrade mislocalized alginate that is trapped in the periplasmic space. This Cobetia marina (Deleya marina) protein is Alginate lyase.